Reading from the N-terminus, the 652-residue chain is Neuroendocrine convertase 2 (652 aa).

A signal peptide spans 1–22 (MKNTHVDLICVFLSIFIGIGEA). Residues 23-107 (VDVYTNHFHV…QLKGYTRTKR (85 aa)) constitute a propeptide that is removed on maturation. A Peptidase S8 domain is found at 136–481 (QWYLKNTGQA…FGVLDAAEMV (346 aa)). Asparagine 167 carries N-linked (GlcNAc...) asparagine glycosylation. Catalysis depends on charge relay system residues aspartate 174 and histidine 215. Disulfide bonds link cysteine 232–cysteine 382 and cysteine 324–cysteine 354. The N-linked (GlcNAc...) asparagine glycan is linked to asparagine 290. Serine 390 (charge relay system) is an active-site residue. N-linked (GlcNAc...) asparagine glycosylation occurs at asparagine 451. A P/Homo B domain is found at 489–625 (TSPPRYHCTA…ELMLHGTREA (137 aa)). Cysteine 496 and cysteine 522 are disulfide-bonded. The interval 501–652 (IDTPHEIPAD…TVQKAHKRSH (152 aa)) is required for ubiquitination-mediated degradation. N-linked (GlcNAc...) asparagine glycosylation is present at asparagine 542.

This sequence belongs to the peptidase S8 family. Furin subfamily. As to quaternary structure, interacts (via C-terminus) with F-box protein fsn-1 (via SPRY domain); the interaction results in egl-3 proteasomal degradation. Ubiquitinated. In terms of tissue distribution, expressed in head and tail ganglia. Expressed in neurons including mechanosensory and motor neurons, and interneurons (at protein level). Expressed in the nerve ring, ventral nerve cord and intestine.

The protein resides in the cell projection. The protein localises to the axon. It is found in the cytoplasmic vesicle. It localises to the secretory vesicle lumen. Its subcellular location is the secreted. It carries out the reaction Release of protein hormones and neuropeptides from their precursors, generally by hydrolysis of -Lys-Arg-|- bonds.. Its function is as follows. Serine endoprotease which cleaves preproteins at paired basic amino acids. Processes FMRFamide-like (flp) and neuropeptide-like protein (nlp) neuropeptides. Probably by processing flp-1 and flp-18, modulates the neuronal excitation-inhibition balance and thus the level of activity of the locomotor circuit. Regulates sensitivity to mechanosensory stimuli. By processing neuropeptides, modulates basal acetylcholine release at the ventral cord neuromuscular junctions. Probably by processing flp neuropeptides, regulates the turning step of male mating behavior. Cleaves pro-insulin-like proteins ins-3, ins-4 and ins-6 into their mature active forms. Together with convertase kpc-1, cleaves pro-insulin-like protein ins-18. By controlling ins-4 and ins-6 processing and thus the activation of the daf-2/InsR pathway, negatively modulates synapse development and synaptic transmission at neuromuscular junctions. Similarly, by controlling ins-4 and ins-6 processing, negatively regulates dauer formation under optimal environmental conditions. Under adverse environmental conditions, may promote dauer formation by processing ins-18, a daf-2/InsR antagonist. May cleave dense-core vesicle membrane protein ida-1. Involved in egg-laying, fat storage and locomotion. This Caenorhabditis elegans protein is Neuroendocrine convertase 2.